We begin with the raw amino-acid sequence, 222 residues long: Holliday junction branch migration complex subunit RuvA (222 aa).

The domain I stretch occupies residues 1 to 67 (MISWLNGLKI…EDGSQLIGFL (67 aa)). The segment at 68-146 (NKLERDLFRK…DLIGSSLKKT (79 aa)) is domain II. A flexible linker region spans residues 147–155 (NNHLELEYE). The tract at residues 155–222 (ETNVADEVRS…TLIRINTESG (68 aa)) is domain III.

This sequence belongs to the RuvA family. In terms of assembly, homotetramer. Forms an RuvA(8)-RuvB(12)-Holliday junction (HJ) complex. HJ DNA is sandwiched between 2 RuvA tetramers; dsDNA enters through RuvA and exits via RuvB. An RuvB hexamer assembles on each DNA strand where it exits the tetramer. Each RuvB hexamer is contacted by two RuvA subunits (via domain III) on 2 adjacent RuvB subunits; this complex drives branch migration. In the full resolvosome a probable DNA-RuvA(4)-RuvB(12)-RuvC(2) complex forms which resolves the HJ.

The protein localises to the cytoplasm. The RuvA-RuvB-RuvC complex processes Holliday junction (HJ) DNA during genetic recombination and DNA repair, while the RuvA-RuvB complex plays an important role in the rescue of blocked DNA replication forks via replication fork reversal (RFR). RuvA specifically binds to HJ cruciform DNA, conferring on it an open structure. The RuvB hexamer acts as an ATP-dependent pump, pulling dsDNA into and through the RuvAB complex. HJ branch migration allows RuvC to scan DNA until it finds its consensus sequence, where it cleaves and resolves the cruciform DNA. The sequence is that of Holliday junction branch migration complex subunit RuvA from Prochlorococcus marinus (strain SARG / CCMP1375 / SS120).